Here is a 241-residue protein sequence, read N- to C-terminus: Anthocyanidin 3-O-glucosyltransferase 4 (241 aa).

6 residues coordinate UDP-alpha-D-glucose: Gln104, His119, Trp122, Asn123, Ser124, and Glu127. Residue Ala142 participates in an anthocyanidin binding. Residues Glu143 and Gln144 each coordinate UDP-alpha-D-glucose.

The protein belongs to the UDP-glycosyltransferase family. Faintly expressed in cotyledons, roots and leaves.

It catalyses the reaction an anthocyanidin + UDP-alpha-D-glucose + H(+) = an anthocyanidin 3-O-beta-D-glucoside + UDP. Its pathway is pigment biosynthesis; anthocyanin biosynthesis. Functionally, in the presence of other necessary color factors, this glycosylation reaction allows the accumulation of anthocyanin pigments. This is Anthocyanidin 3-O-glucosyltransferase 4 (GT4) from Manihot esculenta (Cassava).